A 617-amino-acid chain; its full sequence is Manganese lipoxygenase (617 aa).

Residues 1–17 (MRIGLLAFAVAARYVEA) form the signal peptide. Over residues 23-48 (GEEVASSSAPTTLPSTSSSSALPSPT) the composition is skewed to low complexity. The interval 23–59 (GEEVASSSAPTTLPSTSSSSALPSPTKYTLPHEDPNP) is disordered. N-linked (GlcNAc...) asparagine glycosylation is found at Asn-109, Asn-119, and Asn-160. Positions 122–617 (LRDIQSHGGL…PAVNPFFLSI (496 aa)) constitute a Lipoxygenase domain. Mn(2+) is bound by residues His-293, His-297, His-479, and Asn-483. Asn-547 is a glycosylation site (N-linked (GlcNAc...) asparagine). Ile-617 contributes to the Mn(2+) binding site.

Belongs to the lipoxygenase family. Manganese lipoxygenase subfamily. It depends on Mn(2+) as a cofactor.

Its subcellular location is the secreted. The catalysed reaction is (9Z,12Z)-octadecadienoate + O2 = (9S)-hydroperoxy-(10E,12Z)-octadecadienoate. It catalyses the reaction (9Z,12Z)-octadecadienoate + O2 = (11S)-hydroperoxy-(9Z,12Z)-octadecadienoate. The enzyme catalyses (9Z,12Z)-octadecadienoate + O2 = (13R)-hydroperoxy-(9Z,11E)-octadecadienoate. It carries out the reaction (9Z,12Z,15Z)-octadecatrienoate + O2 = (9S)-hydroperoxy-(10E,12Z,15Z)-octadecatrienoate. The catalysed reaction is (9Z,12Z,15Z)-octadecatrienoate + O2 = (11R)-hydroperoxy-(9Z,12Z,15Z)-octadecatrienoate. It catalyses the reaction (9Z,12Z,15Z)-octadecatrienoate + O2 = (13R)-hydroperoxy-(9Z,11E,15Z)-octadecatrienoate. Lipoxygenase that metabolizes linoleic and alpha-linolenic acids to 9S-, 11- and 13R-hydroperoxy fatty acids. At the end of lipoxygenation, the intermediate products 11S-HPODE and 13R-HPODE from linoleic acid are then transformed into 9S-HPODE as the final product. The intermediate product 11R-HPOTrE from alpha-linolenic acid is transformed into 9S-HPOTrE and 13R-HPOTrE as the final products. 9S-HPOTrE is further oxidized by the enzyme to 9,16-DiHOTrE as the end product. Also acts on gamma-linolenic acid producing 9-HOTrE(n-6) as the main metabolite. The chain is Manganese lipoxygenase from Nakataea oryzae (Rice stem rot fungus).